Reading from the N-terminus, the 486-residue chain is Cobyric acid synthase (486 aa).

In terms of domain architecture, GATase cobBQ-type spans 251–439; it reads RAKIVVPMLS…VHGLFERGEA (189 aa). The active-site Nucleophile is Cys-333. His-431 is a catalytic residue.

It belongs to the CobB/CobQ family. CobQ subfamily.

It participates in cofactor biosynthesis; adenosylcobalamin biosynthesis. Functionally, catalyzes amidations at positions B, D, E, and G on adenosylcobyrinic A,C-diamide. NH(2) groups are provided by glutamine, and one molecule of ATP is hydrogenolyzed for each amidation. This chain is Cobyric acid synthase, found in Caulobacter sp. (strain K31).